A 451-amino-acid polypeptide reads, in one-letter code: Multidrug export protein MepA (451 aa).

12 consecutive transmembrane segments (helical) span residues 26 to 46 (MIGT…IGFL), 54 to 74 (AISL…LFGV), 97 to 117 (SFSI…TLPF), 139 to 159 (LKVM…EQFA), 170 to 190 (IGML…IFGF), 194 to 214 (VVGA…FFIV), 245 to 265 (IPAF…NLFL), 282 to 302 (LVQF…PLIA), 318 to 338 (AVIM…FTIG), 355 to 375 (ATFI…GFLF), 397 to 417 (AIII…GVIW), and 418 to 438 (SLLI…YLLR).

This sequence belongs to the multi antimicrobial extrusion (MATE) (TC 2.A.66.1) family. MepA subfamily.

The protein localises to the cell membrane. Its function is as follows. Multidrug resistance efflux protein. The sequence is that of Multidrug export protein MepA (mepA) from Staphylococcus aureus (strain MSSA476).